The chain runs to 372 residues: Chorismate synthase (372 aa).

NADP(+) is bound by residues Arg48 and Arg54. FMN-binding positions include 125-127 (RSS), 238-239 (NA), Gly278, 293-297 (KPTSS), and Arg319.

This sequence belongs to the chorismate synthase family. In terms of assembly, homotetramer. FMNH2 is required as a cofactor.

It catalyses the reaction 5-O-(1-carboxyvinyl)-3-phosphoshikimate = chorismate + phosphate. It participates in metabolic intermediate biosynthesis; chorismate biosynthesis; chorismate from D-erythrose 4-phosphate and phosphoenolpyruvate: step 7/7. Its function is as follows. Catalyzes the anti-1,4-elimination of the C-3 phosphate and the C-6 proR hydrogen from 5-enolpyruvylshikimate-3-phosphate (EPSP) to yield chorismate, which is the branch point compound that serves as the starting substrate for the three terminal pathways of aromatic amino acid biosynthesis. This reaction introduces a second double bond into the aromatic ring system. This chain is Chorismate synthase, found in Xylella fastidiosa (strain 9a5c).